The following is a 133-amino-acid chain: Protein Wnt-4 (133 aa).

Serine 1 carries O-palmitoleoyl serine; by PORCN lipidation. 2 cysteine pairs are disulfide-bonded: cysteine 69–cysteine 114 and cysteine 99–cysteine 109. An N-linked (GlcNAc...) asparagine glycan is attached at asparagine 100.

The protein belongs to the Wnt family. Palmitoleoylation is required for efficient binding to frizzled receptors. Depalmitoleoylation leads to Wnt signaling pathway inhibition.

It localises to the secreted. The protein localises to the extracellular space. The protein resides in the extracellular matrix. Its function is as follows. Ligand for members of the frizzled family of seven transmembrane receptors. Plays an important role in embryonic development. The sequence is that of Protein Wnt-4 (WNT-4) from Strongylocentrotus purpuratus (Purple sea urchin).